Consider the following 138-residue polypeptide: Transcription antitermination protein NusB (138 aa).

The protein belongs to the NusB family.

In terms of biological role, involved in transcription antitermination. Required for transcription of ribosomal RNA (rRNA) genes. Binds specifically to the boxA antiterminator sequence of the ribosomal RNA (rrn) operons. This Helicobacter pylori (strain G27) protein is Transcription antitermination protein NusB.